Consider the following 153-residue polypeptide: Nucleoside diphosphate kinase (153 aa).

Residues Lys12, Phe60, Arg88, Thr94, Arg105, and Asn115 each contribute to the ATP site. His118 functions as the Pros-phosphohistidine intermediate in the catalytic mechanism.

The protein belongs to the NDK family. It depends on Mg(2+) as a cofactor.

The protein localises to the cytoplasm. It catalyses the reaction a 2'-deoxyribonucleoside 5'-diphosphate + ATP = a 2'-deoxyribonucleoside 5'-triphosphate + ADP. The enzyme catalyses a ribonucleoside 5'-diphosphate + ATP = a ribonucleoside 5'-triphosphate + ADP. Functionally, major role in the synthesis of nucleoside triphosphates other than ATP. The ATP gamma phosphate is transferred to the NDP beta phosphate via a ping-pong mechanism, using a phosphorylated active-site intermediate. This Natronomonas pharaonis (strain ATCC 35678 / DSM 2160 / CIP 103997 / JCM 8858 / NBRC 14720 / NCIMB 2260 / Gabara) (Halobacterium pharaonis) protein is Nucleoside diphosphate kinase.